A 485-amino-acid polypeptide reads, in one-letter code: Aspartyl/glutamyl-tRNA(Asn/Gln) amidotransferase subunit B (485 aa).

It belongs to the GatB/GatE family. GatB subfamily. As to quaternary structure, heterotrimer of A, B and C subunits.

It carries out the reaction L-glutamyl-tRNA(Gln) + L-glutamine + ATP + H2O = L-glutaminyl-tRNA(Gln) + L-glutamate + ADP + phosphate + H(+). The enzyme catalyses L-aspartyl-tRNA(Asn) + L-glutamine + ATP + H2O = L-asparaginyl-tRNA(Asn) + L-glutamate + ADP + phosphate + 2 H(+). Allows the formation of correctly charged Asn-tRNA(Asn) or Gln-tRNA(Gln) through the transamidation of misacylated Asp-tRNA(Asn) or Glu-tRNA(Gln) in organisms which lack either or both of asparaginyl-tRNA or glutaminyl-tRNA synthetases. The reaction takes place in the presence of glutamine and ATP through an activated phospho-Asp-tRNA(Asn) or phospho-Glu-tRNA(Gln). In Bordetella avium (strain 197N), this protein is Aspartyl/glutamyl-tRNA(Asn/Gln) amidotransferase subunit B.